A 211-amino-acid polypeptide reads, in one-letter code: Uracil phosphoribosyltransferase (211 aa).

5-phospho-alpha-D-ribose 1-diphosphate-binding positions include Arg-79, Arg-104, and 131–139 (DPMLATGGS). Uracil is bound by residues Ile-196 and 201 to 203 (GDA). Asp-202 lines the 5-phospho-alpha-D-ribose 1-diphosphate pocket.

Belongs to the UPRTase family. Mg(2+) serves as cofactor.

The enzyme catalyses UMP + diphosphate = 5-phospho-alpha-D-ribose 1-diphosphate + uracil. Its pathway is pyrimidine metabolism; UMP biosynthesis via salvage pathway; UMP from uracil: step 1/1. With respect to regulation, allosterically activated by GTP. Functionally, catalyzes the conversion of uracil and 5-phospho-alpha-D-ribose 1-diphosphate (PRPP) to UMP and diphosphate. The polypeptide is Uracil phosphoribosyltransferase (Limosilactobacillus reuteri (strain DSM 20016) (Lactobacillus reuteri)).